The following is a 902-amino-acid chain: Histone-lysine N-methyltransferase CLF (902 aa).

The segment covering 1-14 (MASEASPSSSATRS) has biased composition (low complexity). Disordered stretches follow at residues 1-33 (MASEASPSSSATRSEPPKDSPAEERGPASKEVS), 73-107 (SMERGGSCKDGSDLLVKRQRDSPGMKSGIDESNNN), and 335-522 (GKTG…FMGE). 2 stretches are compositionally biased toward basic and acidic residues: residues 15-33 (EPPKDSPAEERGPASKEVS) and 78-95 (GSCKDGSDLLVKRQRDSP). A compositionally biased stretch (polar residues) spans 337–357 (TGTSSDGAGTKTTPTKFSSKL). Over residues 394–403 (DKVSSSPKVK) the composition is skewed to low complexity. Residues 404–416 (GSGRRVGRKRNKN) are compositionally biased toward basic residues. A compositionally biased stretch (low complexity) spans 438-449 (SDSIASGSCSPS). Residues 459-473 (ATSSSQKHVKSGNSG) show a composition bias toward polar residues. The 51-residue stretch at 531 to 581 (TNKLWRPLEKSLFDKGVEIFGMNSCLIARNLLSGFKSCWEVFQYMTCSENK) folds into the SANT domain. Positions 638 to 737 (RKRITEKKDQ…SLGVPSQRGD (100 aa)) constitute a CXC domain. The SET domain occupies 752–867 (QRVLLGISDV…AGEELFYDYR (116 aa)). Tyr-866 is a binding site for S-adenosyl-L-methionine. The span at 875–890 (AWAKKPEAPGSKKDEN) shows a compositional bias: basic and acidic residues. A disordered region spans residues 875–902 (AWAKKPEAPGSKKDENVTPSVGRPKKLA).

It belongs to the class V-like SAM-binding methyltransferase superfamily. Histone-lysine methyltransferase family. EZ subfamily. In terms of assembly, probable component of a PcG complex. In plants, PcG complexes are probably composed of a member of the EZ family (CLF or MEA), FIE, and a member of the VEFS family (FIS2, VRN2 or EMF2). Interacts with FIE. Interacts with RING1A. Binds to ALP1. Interacts with BLI. Binds to ATX1 in the nucleus. Interacts with EOL1. Interacts (via SANT domain) with HXK1 in the nucleus. In terms of tissue distribution, strongly expressed throughout the apical meristem, leaf primordia, and leaves of 7-8 day-old seedling. Weakly expressed in the vasculature of hypocotyl. Strongly expressed throughout the young stages 1 and 2 floral meristems that arose on the flanks of the apex. In stage 3 and 4 flowers, it is expressed in the emerging sepal primordia and in the dome of the floral meristem. During stages 6 and 7, it is strongly expressed in developing petal and stamen, and weakly expressed in the sepals. Late in floral development, at stage 12, it is weakly expressed in all floral whorls, and expressed at intermediate level in petals and ovules.

It is found in the nucleus. It catalyses the reaction L-lysyl-[histone] + S-adenosyl-L-methionine = N(6)-methyl-L-lysyl-[histone] + S-adenosyl-L-homocysteine + H(+). Functionally, polycomb group (PcG) protein. Catalytic subunit of some PcG multiprotein complex, which methylates 'Lys-27' of histone H3, leading to transcriptional repression of the affected target genes, mainly abscisic acid (ABA) responsive elements. Required to regulate floral development by repressing the AGAMOUS homeotic gene in leaves, inflorescence stems and flowers. Together with ATX1, modulates AG nucleosome methylation statement. Regulates the antero-posterior organization of the endosperm, as well as the division and elongation rates of leaf cells. PcG proteins act by forming multiprotein complexes, which are required to maintain the transcriptionally repressive state of homeotic genes throughout development. PcG proteins are not required to initiate repression, but to maintain it during later stages of development. Forms a nuclear complex with EZA1/SWN and HXK1 to target common glucose-responsive genes and regulate glucose signaling by glucose-mediated gene repression. Affects the recruitment of HXK1 to the target chromatin. This chain is Histone-lysine N-methyltransferase CLF, found in Arabidopsis thaliana (Mouse-ear cress).